We begin with the raw amino-acid sequence, 69 residues long: uncharacterized protein (69 aa).

4Fe-4S ferredoxin-type domains follow at residues 2–30 and 38–67; these read KIEI…KSKK and PPIP…IELS. [4Fe-4S] cluster-binding residues include cysteine 10, cysteine 13, cysteine 16, cysteine 20, cysteine 47, cysteine 50, cysteine 53, and cysteine 57.

[4Fe-4S] cluster serves as cofactor.

This is an uncharacterized protein from Methanocaldococcus jannaschii (strain ATCC 43067 / DSM 2661 / JAL-1 / JCM 10045 / NBRC 100440) (Methanococcus jannaschii).